Here is a 1984-residue protein sequence, read N- to C-terminus: Vitellogenin receptor Yl (1984 aa).

Basic and acidic residues predominate over residues 1 to 19 (MCQAEHQVHPSEQRIRVES). A disordered region spans residues 1–48 (MCQAEHQVHPSEQRIRVESPKMTASRRGFNLTSQTRAHPSSGGSTSSR). Asn-30 carries an N-linked (GlcNAc...) asparagine glycan. A compositionally biased stretch (polar residues) spans 30–48 (NLTSQTRAHPSSGGSTSSR). LDL-receptor class A domains lie at 89–125 (RCDA…LDCD), 128–167 (LCRP…LNCP), 183–221 (SCSK…AGCK), 226–263 (TCPG…RGCL), and 265–305 (LCEP…DLCH). Disulfide bonds link Cys-90–Cys-102, Cys-97–Cys-115, Cys-109–Cys-124, Cys-129–Cys-144, Cys-137–Cys-157, Cys-151–Cys-166, Cys-184–Cys-197, Cys-191–Cys-210, Cys-204–Cys-220, Cys-227–Cys-239, Cys-234–Cys-253, Cys-247–Cys-262, Cys-266–Cys-281, Cys-275–Cys-294, Cys-288–Cys-304, Cys-310–Cys-321, Cys-315–Cys-331, Cys-352–Cys-363, Cys-359–Cys-372, and Cys-374–Cys-387. In terms of domain architecture, EGF-like 1 spans 306–343 (SKPDCDAKKCALGAKCHMMPASGAECFCPKGFRLAKFE). Residues 348 to 388 (DVDECKEQDDLCSQGCENTSGGYRCVCDAGYLLDKDNRTCR) form the EGF-like 2; calcium-binding domain. Asn-365, Asn-384, and Asn-429 each carry an N-linked (GlcNAc...) asparagine glycan. LDL-receptor class B repeat units lie at residues 441-485 (SHIY…DWLT), 486-528 (QNIY…WPQK), 529-572 (GLMF…DMHQ), and 573-615 (QRIY…FEDQ). N-linked (GlcNAc...) asparagine glycosylation is found at Asn-666, Asn-749, and Asn-782. LDL-receptor class B repeat units follow at residues 750–792 (GSLI…DHLS), 793–836 (RNLY…MPAE), 884–925 (QTIF…VHHD), and 934–940 (PRIYWTH). An N-linked (GlcNAc...) asparagine glycan is attached at Asn-1022. 5 LDL-receptor class A domains span residues 1024-1063 (TCVE…MNCD), 1073-1110 (LCSP…QHCE), 1117-1153 (KCHV…LLCE), 1157-1194 (RCEP…DKCV), and 1197-1233 (SCPP…LNCG). 15 disulfides stabilise this stretch: Cys-1025–Cys-1040, Cys-1035–Cys-1053, Cys-1047–Cys-1062, Cys-1074–Cys-1087, Cys-1081–Cys-1100, Cys-1094–Cys-1109, Cys-1118–Cys-1130, Cys-1125–Cys-1143, Cys-1137–Cys-1152, Cys-1158–Cys-1170, Cys-1165–Cys-1183, Cys-1177–Cys-1193, Cys-1198–Cys-1210, Cys-1205–Cys-1223, and Cys-1217–Cys-1232. N-linked (GlcNAc...) asparagine glycosylation occurs at Asn-1240. 2 LDL-receptor class A domains span residues 1242–1280 (SCAE…ADCG) and 1282–1319 (VCSI…LSCE). 6 disulfide bridges follow: Cys-1243-Cys-1257, Cys-1250-Cys-1270, Cys-1264-Cys-1279, Cys-1283-Cys-1296, Cys-1290-Cys-1309, and Cys-1303-Cys-1318. A glycan (N-linked (GlcNAc...) asparagine) is linked at Asn-1265. A glycan (N-linked (GlcNAc...) asparagine) is linked at Asn-1326. One can recognise an LDL-receptor class A 13 domain in the interval 1339 to 1376 (SCRPHLFDCQDGECVDLSRVCNNFPDCTNGHDEGPKCA). 5 disulfide bridges follow: Cys-1340-Cys-1352, Cys-1347-Cys-1365, Cys-1359-Cys-1375, Cys-1422-Cys-1432, and Cys-1428-Cys-1441. Residues 1418 to 1453 (DIDECQEQQPCAQLCENTLGGYQCQCHADFMLRQDR) enclose the EGF-like 3; calcium-binding domain. N-linked (GlcNAc...) asparagine glycosylation is found at Asn-1475 and Asn-1490. 2 LDL-receptor class B repeats span residues 1588-1637 (ARIF…DPHQ) and 1638-1687 (QLLY…YENN). Residues 1800–1820 (WLMALFVLAAGSLIAGLGYMY) traverse the membrane as a helical segment. Topologically, residues 1821–1984 (YQYRQRGHTD…GNDANARFVS (164 aa)) are cytoplasmic. Phosphoserine is present on Ser-1926. Disordered stretches follow at residues 1927-1951 (KLHA…RQVP) and 1965-1984 (SAGQ…RFVS). Gly residues predominate over residues 1932–1946 (DGGGAGGDGDGGRGV).

Belongs to the LDLR family. Interacts with osk (isoform A). In terms of tissue distribution, ovary.

It is found in the cell membrane. Its subcellular location is the cytoplasm. The protein resides in the cell cortex. The protein localises to the cytoplasmic vesicle. It localises to the clathrin-coated vesicle membrane. It is found in the early endosome membrane. Its subcellular location is the endosome. The protein resides in the multivesicular body lumen. In terms of biological role, cell surface receptor involved in uptake of vitellogenins (yolk proteins) into developing oocytes by receptor-mediated endocytosis. May also mediate uptake of apolpp/apolipophorins and their incorporation into yolk granules. Along with its ligands, required for maintenance of microtubule plus-end orientation towards the posterior pole of oocytes. Involved in polarized localization of germ plasm components, such as osk mRNA and vas protein, to the oocyte posterior cortex. Receptor-mediated endocytosis of vitellogenin receptor ligands is critical for osk (isoform A) mediated actin reorganization and the anchoring of germ plasm components to the oocyte cortex. The protein is Vitellogenin receptor Yl of Drosophila melanogaster (Fruit fly).